Consider the following 428-residue polypeptide: Glutamate-1-semialdehyde 2,1-aminomutase (428 aa).

Lys-265 is subject to N6-(pyridoxal phosphate)lysine.

Belongs to the class-III pyridoxal-phosphate-dependent aminotransferase family. HemL subfamily. In terms of assembly, homodimer. Pyridoxal 5'-phosphate serves as cofactor.

Its subcellular location is the cytoplasm. It catalyses the reaction (S)-4-amino-5-oxopentanoate = 5-aminolevulinate. It participates in porphyrin-containing compound metabolism; protoporphyrin-IX biosynthesis; 5-aminolevulinate from L-glutamyl-tRNA(Glu): step 2/2. The chain is Glutamate-1-semialdehyde 2,1-aminomutase from Legionella pneumophila (strain Paris).